A 247-amino-acid chain; its full sequence is MKFDILTLFPAMFDGPLTESILKRAAEKGLIEVKLHNIRDFAFDRHSVTDDYPYGGGAGMVMKVEPLAACIEHAKVGSPRARVILTTPRGRSFNHAVAEELAREEALIIICGRYEGVDERVRELFVDDEISIGDFVLTGGEMAAMVLVDAVSRFVPGVLGSDESAVNDSFADGLLEYPQYTRPAEFRGLGVPSVLLSGNHQEIAKWRRRQSLGRTAASRPDLLTDAHLSASDREYLEELQRVAGSDG.

S-adenosyl-L-methionine is bound by residues glycine 112 and 132-137 (IGDFVL).

Belongs to the RNA methyltransferase TrmD family. Homodimer.

Its subcellular location is the cytoplasm. The catalysed reaction is guanosine(37) in tRNA + S-adenosyl-L-methionine = N(1)-methylguanosine(37) in tRNA + S-adenosyl-L-homocysteine + H(+). Specifically methylates guanosine-37 in various tRNAs. The chain is tRNA (guanine-N(1)-)-methyltransferase from Geotalea uraniireducens (strain Rf4) (Geobacter uraniireducens).